Here is a 376-residue protein sequence, read N- to C-terminus: UDP-N-acetylglucosamine--N-acetylmuramyl-(pentapeptide) pyrophosphoryl-undecaprenol N-acetylglucosamine transferase (376 aa).

UDP-N-acetyl-alpha-D-glucosamine is bound by residues 12 to 14, Asn126, Arg163, Ser198, and Gln296; that span reads TAG.

It belongs to the glycosyltransferase 28 family. MurG subfamily.

It localises to the cell membrane. It catalyses the reaction di-trans,octa-cis-undecaprenyl diphospho-N-acetyl-alpha-D-muramoyl-L-alanyl-D-glutamyl-meso-2,6-diaminopimeloyl-D-alanyl-D-alanine + UDP-N-acetyl-alpha-D-glucosamine = di-trans,octa-cis-undecaprenyl diphospho-[N-acetyl-alpha-D-glucosaminyl-(1-&gt;4)]-N-acetyl-alpha-D-muramoyl-L-alanyl-D-glutamyl-meso-2,6-diaminopimeloyl-D-alanyl-D-alanine + UDP + H(+). Its pathway is cell wall biogenesis; peptidoglycan biosynthesis. Cell wall formation. Catalyzes the transfer of a GlcNAc subunit on undecaprenyl-pyrophosphoryl-MurNAc-pentapeptide (lipid intermediate I) to form undecaprenyl-pyrophosphoryl-MurNAc-(pentapeptide)GlcNAc (lipid intermediate II). The chain is UDP-N-acetylglucosamine--N-acetylmuramyl-(pentapeptide) pyrophosphoryl-undecaprenol N-acetylglucosamine transferase from Frankia casuarinae (strain DSM 45818 / CECT 9043 / HFP020203 / CcI3).